The chain runs to 238 residues: Large ribosomal subunit protein uL5c (238 aa).

It belongs to the universal ribosomal protein uL5 family. As to quaternary structure, part of the 50S ribosomal subunit; contacts the 5S rRNA.

Its subcellular location is the plastid. It localises to the chloroplast. Its function is as follows. Binds 5S rRNA, forms part of the central protuberance of the 50S subunit. The polypeptide is Large ribosomal subunit protein uL5c (rpl5) (Trieres chinensis (Marine centric diatom)).